The following is a 304-amino-acid chain: Pseudouridine-5'-phosphate glycosidase (304 aa).

Glu25 serves as the catalytic Proton donor. Substrate-binding residues include Lys86 and Val106. Asp138 contacts Mn(2+). 140–142 serves as a coordination point for substrate; the sequence is SAD. Lys159 functions as the Nucleophile in the catalytic mechanism.

This sequence belongs to the pseudouridine-5'-phosphate glycosidase family. In terms of assembly, homotrimer. The cofactor is Mn(2+).

The enzyme catalyses D-ribose 5-phosphate + uracil = psi-UMP + H2O. In terms of biological role, catalyzes the reversible cleavage of pseudouridine 5'-phosphate (PsiMP) to ribose 5-phosphate and uracil. Functions biologically in the cleavage direction, as part of a pseudouridine degradation pathway. The sequence is that of Pseudouridine-5'-phosphate glycosidase from Lysinibacillus sphaericus (strain C3-41).